We begin with the raw amino-acid sequence, 141 residues long: Nucleoside diphosphate kinase (141 aa).

ATP is bound by residues Lys-11, Tyr-59, Arg-87, Thr-93, Arg-104, and Asn-114. The active-site Pros-phosphohistidine intermediate is the His-117.

It belongs to the NDK family. Homotetramer. Mg(2+) is required as a cofactor.

Its subcellular location is the cytoplasm. The enzyme catalyses a 2'-deoxyribonucleoside 5'-diphosphate + ATP = a 2'-deoxyribonucleoside 5'-triphosphate + ADP. It carries out the reaction a ribonucleoside 5'-diphosphate + ATP = a ribonucleoside 5'-triphosphate + ADP. In terms of biological role, major role in the synthesis of nucleoside triphosphates other than ATP. The ATP gamma phosphate is transferred to the NDP beta phosphate via a ping-pong mechanism, using a phosphorylated active-site intermediate. This is Nucleoside diphosphate kinase from Orientia tsutsugamushi (strain Boryong) (Rickettsia tsutsugamushi).